Reading from the N-terminus, the 168-residue chain is MRKPVGAIEIVLAPGEVVFETRPARLRTLLGSCVAITFWHPQQHIGGMCHFMLPHRPHKHKALDGRYGDEALEMLIRHALANHTKPRDYQVKLFGGGQMFPEQQNDSQQLNVADLNVHAALAMAERHRLQLKAQDMGRTGHRTIIFDLWDGNVWVKHQPIEVTEKDAR.

It belongs to the CheD family.

The catalysed reaction is L-glutaminyl-[protein] + H2O = L-glutamyl-[protein] + NH4(+). In terms of biological role, probably deamidates glutamine residues to glutamate on methyl-accepting chemotaxis receptors (MCPs), playing an important role in chemotaxis. In Pseudomonas syringae pv. tomato (strain ATCC BAA-871 / DC3000), this protein is Probable chemoreceptor glutamine deamidase CheD.